Here is a 125-residue protein sequence, read N- to C-terminus: Small ribosomal subunit protein uS12 (125 aa).

D89 carries the 3-methylthioaspartic acid modification.

This sequence belongs to the universal ribosomal protein uS12 family. In terms of assembly, part of the 30S ribosomal subunit. Contacts proteins S8 and S17. May interact with IF1 in the 30S initiation complex.

With S4 and S5 plays an important role in translational accuracy. Functionally, interacts with and stabilizes bases of the 16S rRNA that are involved in tRNA selection in the A site and with the mRNA backbone. Located at the interface of the 30S and 50S subunits, it traverses the body of the 30S subunit contacting proteins on the other side and probably holding the rRNA structure together. The combined cluster of proteins S8, S12 and S17 appears to hold together the shoulder and platform of the 30S subunit. The sequence is that of Small ribosomal subunit protein uS12 from Bordetella avium (strain 197N).